We begin with the raw amino-acid sequence, 436 residues long: 23S rRNA (uracil(1939)-C(5))-methyltransferase RlmD (436 aa).

One can recognise a TRAM domain in the interval 10-68; sequence KQKTTQKIVAEIQDLDYQGLGVAKIQGKTWFIENALPTEKVEAVVTDEKRQYGLATAQK. [4Fe-4S] cluster is bound by residues Cys81, Cys87, Cys90, and Cys168. S-adenosyl-L-methionine-binding residues include Gln270, Phe299, Asn304, Glu320, Asp347, and Asp368. Residue Cys394 is the Nucleophile of the active site.

This sequence belongs to the class I-like SAM-binding methyltransferase superfamily. RNA M5U methyltransferase family. RlmD subfamily.

The enzyme catalyses uridine(1939) in 23S rRNA + S-adenosyl-L-methionine = 5-methyluridine(1939) in 23S rRNA + S-adenosyl-L-homocysteine + H(+). Its function is as follows. Catalyzes the formation of 5-methyl-uridine at position 1939 (m5U1939) in 23S rRNA. In Haemophilus parainfluenzae (strain T3T1), this protein is 23S rRNA (uracil(1939)-C(5))-methyltransferase RlmD.